Reading from the N-terminus, the 405-residue chain is Exodeoxyribonuclease 7 large subunit (405 aa).

Belongs to the XseA family. As to quaternary structure, heterooligomer composed of large and small subunits.

The protein localises to the cytoplasm. It carries out the reaction Exonucleolytic cleavage in either 5'- to 3'- or 3'- to 5'-direction to yield nucleoside 5'-phosphates.. Its function is as follows. Bidirectionally degrades single-stranded DNA into large acid-insoluble oligonucleotides, which are then degraded further into small acid-soluble oligonucleotides. The chain is Exodeoxyribonuclease 7 large subunit from Halothermothrix orenii (strain H 168 / OCM 544 / DSM 9562).